Reading from the N-terminus, the 96-residue chain is Large ribosomal subunit protein eL14 (96 aa).

This sequence belongs to the eukaryotic ribosomal protein eL14 family.

This is Large ribosomal subunit protein eL14 from Metallosphaera sedula (strain ATCC 51363 / DSM 5348 / JCM 9185 / NBRC 15509 / TH2).